The following is a 402-amino-acid chain: Putative polyketide beta-ketoacyl synthase 2 (402 aa).

2 disordered regions span residues 1-30 (MTPV…WAPR) and 188-222 (VEPR…FDRD). A Ketosynthase family 3 (KS3) domain is found at 1–400 (MTPVAVTGMG…GFNSALVVRA (400 aa)). Residues 192–205 (SAPGAGSPSSPAGG) show a composition bias toward low complexity.

The protein belongs to the thiolase-like superfamily. Beta-ketoacyl-ACP synthases family.

It participates in antifungal biosynthesis; monensin biosynthesis. The protein is Putative polyketide beta-ketoacyl synthase 2 of Streptomyces virginiae (Streptomyces cinnamonensis).